The primary structure comprises 264 residues: Triosephosphate isomerase (264 aa).

A substrate-binding site is contributed by 13–15 (NWK). The active-site Electrophile is the His-106. Catalysis depends on Glu-179, which acts as the Proton acceptor. Substrate is bound by residues Gly-185, Ser-223, and 244–245 (GG).

This sequence belongs to the triosephosphate isomerase family. Homodimer.

Its subcellular location is the cytoplasm. It carries out the reaction D-glyceraldehyde 3-phosphate = dihydroxyacetone phosphate. It functions in the pathway carbohydrate biosynthesis; gluconeogenesis. The protein operates within carbohydrate degradation; glycolysis; D-glyceraldehyde 3-phosphate from glycerone phosphate: step 1/1. Involved in the gluconeogenesis. Catalyzes stereospecifically the conversion of dihydroxyacetone phosphate (DHAP) to D-glyceraldehyde-3-phosphate (G3P). This is Triosephosphate isomerase from Acinetobacter baumannii (strain SDF).